Here is a 75-residue protein sequence, read N- to C-terminus: Small ribosomal subunit protein bS18 (75 aa).

The protein belongs to the bacterial ribosomal protein bS18 family. Part of the 30S ribosomal subunit. Forms a tight heterodimer with protein bS6.

Its function is as follows. Binds as a heterodimer with protein bS6 to the central domain of the 16S rRNA, where it helps stabilize the platform of the 30S subunit. The chain is Small ribosomal subunit protein bS18 from Saccharophagus degradans (strain 2-40 / ATCC 43961 / DSM 17024).